We begin with the raw amino-acid sequence, 63 residues long: Iota-crystallin (63 aa).

This sequence belongs to the calycin superfamily. Fatty-acid binding protein (FABP) family.

Binds vitamin A2 in the eye lens and thus functions as a UV filter. Intracellular transport of retinol. The chain is Iota-crystallin (CRBPI) from Gonatodes vittatus (Wiegmann's striped gecko).